The sequence spans 271 residues: Phosphate import ATP-binding protein PstB 3 (271 aa).

Residues 20–266 (LRVEGLGFYY…PQETQTRDYV (247 aa)) form the ABC transporter domain. 52–59 (GPSGCGKS) contributes to the ATP binding site.

The protein belongs to the ABC transporter superfamily. Phosphate importer (TC 3.A.1.7) family. As to quaternary structure, the complex is composed of two ATP-binding proteins (PstB), two transmembrane proteins (PstC and PstA) and a solute-binding protein (PstS).

It localises to the cell inner membrane. The enzyme catalyses phosphate(out) + ATP + H2O = ADP + 2 phosphate(in) + H(+). Functionally, part of the ABC transporter complex PstSACB involved in phosphate import. Responsible for energy coupling to the transport system. The chain is Phosphate import ATP-binding protein PstB 3 from Synechocystis sp. (strain ATCC 27184 / PCC 6803 / Kazusa).